We begin with the raw amino-acid sequence, 149 residues long: Dehydrin Rab15 (149 aa).

The tract at residues 1 to 149 (MEFQGQHDNP…KIKEKLPGQH (149 aa)) is disordered. The segment covering 78-93 (KEKIKEKLPGGHKDNQ) has biased composition (basic and acidic residues). A compositionally biased stretch (gly residues) spans 100–117 (TGTGGAYGPGTGTGGAYG). The segment covering 132–149 (GEKKGIMDKIKEKLPGQH) has biased composition (basic and acidic residues).

It belongs to the plant dehydrin family.

This Triticum aestivum (Wheat) protein is Dehydrin Rab15 (RAB15).